A 66-amino-acid chain; its full sequence is Large ribosomal subunit protein uL29 (66 aa).

This sequence belongs to the universal ribosomal protein uL29 family.

This Thermococcus gammatolerans (strain DSM 15229 / JCM 11827 / EJ3) protein is Large ribosomal subunit protein uL29.